Consider the following 179-residue polypeptide: ADP-ribosylation factor-like protein 5A (179 aa).

Glycine 2 carries N-myristoyl glycine lipidation. GTP contacts are provided by residues 23-30, 66-70, 125-128, and alanine 159; these read GLDNAGKT, DIGGQ, and NKQD.

It belongs to the small GTPase superfamily. Arf family.

Functionally, lacks ADP-ribosylation enhancing activity. The sequence is that of ADP-ribosylation factor-like protein 5A (ARL5A) from Homo sapiens (Human).